Consider the following 107-residue polypeptide: Multidrug resistance protein mmr (107 aa).

Transmembrane regions (helical) follow at residues 2-19 (IYLY…ATSL), 29-51 (LWPT…LSIS), 58-80 (VAYA…LFLG), and 84-106 (SVMK…LAGA).

Belongs to the drug/metabolite transporter (DMT) superfamily. Small multidrug resistance (SMR) (TC 2.A.7.1) family. Mmr subfamily.

Its subcellular location is the cell membrane. Its function is as follows. Multidrug efflux pump. Confers resistance to tetraphenylphosphonium (TPP), erythromycin, ethidium bromide, acriflavine, safranin O and pyronin Y. In Mycobacterium bovis (strain ATCC BAA-935 / AF2122/97), this protein is Multidrug resistance protein mmr (mmr).